We begin with the raw amino-acid sequence, 197 residues long: 3-isopropylmalate dehydratase small subunit (197 aa).

It belongs to the LeuD family. LeuD type 1 subfamily. In terms of assembly, heterodimer of LeuC and LeuD.

The enzyme catalyses (2R,3S)-3-isopropylmalate = (2S)-2-isopropylmalate. The protein operates within amino-acid biosynthesis; L-leucine biosynthesis; L-leucine from 3-methyl-2-oxobutanoate: step 2/4. Catalyzes the isomerization between 2-isopropylmalate and 3-isopropylmalate, via the formation of 2-isopropylmaleate. The sequence is that of 3-isopropylmalate dehydratase small subunit from Streptomyces griseus subsp. griseus (strain JCM 4626 / CBS 651.72 / NBRC 13350 / KCC S-0626 / ISP 5235).